A 288-amino-acid polypeptide reads, in one-letter code: Syntaxin-1A (288 aa).

Residues 1–13 are compositionally biased toward basic and acidic residues; that stretch reads MKDRTQELRTAKD. Residues 1–20 are disordered; it reads MKDRTQELRTAKDSDDDDDV. The Cytoplasmic portion of the chain corresponds to 1 to 265; sequence MKDRTQELRT…KYQSKARRKK (265 aa). Phosphoserine is present on residues Ser14, Ser64, and Ser95. The stretch at 68–109 forms a coiled coil; it reads DEKTKEELEELMSDIKKTANKVRSKLKSIEQSIEQEEGLNRS. A Phosphoserine; by DAPK1 modification is found at Ser188. Residues 192–254 form the t-SNARE coiled-coil homology domain; sequence LSEIETRHSE…ERAVSDTKKA (63 aa). Glycyl lysine isopeptide (Lys-Gly) (interchain with G-Cter in SUMO) cross-links involve residues Lys252, Lys253, and Lys256. The helical; Anchor for type IV membrane protein transmembrane segment at 266-286 threads the bilayer; that stretch reads IMIIICCVILGIIIASTIGGI. The Extracellular segment spans residues 287 to 288; the sequence is FG.

This sequence belongs to the syntaxin family. As to quaternary structure, part of the SNARE core complex containing SNAP25, VAMP2 and STX1A; this complex constitutes the basic catalytic machinery of the complex neurotransmitter release apparatus. The SNARE complex interacts with CPLX1. Interacts with STXBP1. The interaction with STXBP1 promotes assembly of the SNARE complex. Interacts (via C-terminus) with KCNB1 (via C-terminus); the interaction increases in a calcium-dependent manner and induces a pore-independent enhancement of exocytosis in neuroendocrine cells, chromaffin cells, pancreatic beta cells and from the soma of dorsal root ganglia (DRG) neurons. Interacts with SYTL4. Interacts with STXBP6. Interacts with PLCL1 (via C2 domain). Interacts with OTOF. Interacts with LGI3. Interacts (via the H3 domain) with SLC6A4 (via the N-terminus); this interaction regulates SLC4A6 channel conductance in thalamocortical neurons. Interacts with SYT6 and SYT8; the interaction is Ca(2+)-dependent. Interacts with VAMP8. Interacts with SNAP23. Interacts with VAPA and SYBU. Interacts with PRRT2. Interacts with SEPT8. Interacts with STXBP5L. Interacts with synaptotagmin-1/SYT1. Interacts with SEPTIN5; in the cerebellar cortex. Interacts with SEPTIN4; in the striatum. In terms of processing, phosphorylated by CK2. Phosphorylation at Ser-188 by DAPK1 significantly decreases its interaction with STXBP1. Post-translationally, phosphorylated by CK2. Phosphorylation at Ser-188 by DAPK1 significantly decreases its interaction with STXBP1. Sumoylated, sumoylation is required for regulation of synaptic vesicle endocytosis. In terms of tissue distribution, expressed in the striatum (at protein level). Expressed in the ileum.

The protein localises to the cytoplasmic vesicle. The protein resides in the secretory vesicle. It is found in the synaptic vesicle membrane. It localises to the synapse. Its subcellular location is the synaptosome. The protein localises to the cell membrane. Its function is as follows. Plays an essential role in hormone and neurotransmitter calcium-dependent exocytosis and endocytosis. Part of the SNARE (Soluble NSF Attachment Receptor) complex composed of SNAP25, STX1A and VAMP2 which mediates the fusion of synaptic vesicles with the presynaptic plasma membrane. STX1A and SNAP25 are localized on the plasma membrane while VAMP2 resides in synaptic vesicles. The pairing of the three SNAREs from the N-terminal SNARE motifs to the C-terminal anchors leads to the formation of the SNARE complex, which brings membranes into close proximity and results in final fusion. Participates in the calcium-dependent regulation of acrosomal exocytosis in sperm. Also plays an important role in the exocytosis of hormones such as insulin or glucagon-like peptide 1 (GLP-1). This Mus musculus (Mouse) protein is Syntaxin-1A (Stx1a).